The sequence spans 706 residues: Probable serine/threonine-protein kinase zyg-1 (706 aa).

One can recognise a Protein kinase domain in the interval 13 to 249 (YSHLKEIGKG…LTQIVLSEFM (237 aa)). Residues 19–27 (IGKGGFGVV) and Lys-41 contribute to the ATP site. Residue Asp-131 is the Proton acceptor of the active site. 2 stretches are compositionally biased toward basic and acidic residues: residues 261–290 (SREHSRDGRRQRSREPVRSSRDDRSRDGRA) and 323–336 (FDSERGRERDRDSG). Disordered stretches follow at residues 261–351 (SREH…NRSQ) and 566–632 (SPSS…VAPS). The span at 566–579 (SPSSLMPSGSSQTS) shows a compositional bias: low complexity. 2 stretches are compositionally biased toward polar residues: residues 580–592 (RFPFSNLSNNQPS) and 603–629 (KPTSSQRASSANVQRRVSTDENSSPSV).

It belongs to the protein kinase superfamily. Ser/Thr protein kinase family. Interacts with sel-10. Probably ubiquitinated by the SCF(sel-10) and SCF(lin-23) E3 ubiquitin ligase complexes, leading to its proteasomal degradation.

The protein localises to the cytoplasm. It is found in the cytoskeleton. Its subcellular location is the microtubule organizing center. The protein resides in the centrosome. It localises to the centriole. It carries out the reaction L-seryl-[protein] + ATP = O-phospho-L-seryl-[protein] + ADP + H(+). The catalysed reaction is L-threonyl-[protein] + ATP = O-phospho-L-threonyl-[protein] + ADP + H(+). Protein kinase that plays a central role in centrosome duplication, control of centrosome size, spindle formation and nuclear envelope breakdown during cell divisions. Paternal copy is required to regulate synthesis of daughter centrioles prior to fertilization. Maternal copy regulates centrosome duplication during later cell cycles. Functions upstream of sas-5 and sas-6, and is required for their localization to the centrosome. Its role in nuclear envelope breakdown is mediated by the spindly-like protein spdl-1 and the RZZ complex, which in turn recruits the spindle checkpoint proteins mdf-1 and mdf-2, dynein and dynactin to unattached kinetochores. This is Probable serine/threonine-protein kinase zyg-1 from Caenorhabditis elegans.